The primary structure comprises 103 residues: Putative membrane protein insertion efficiency factor (103 aa).

The segment at 68–103 is disordered; that stretch reads HEGGYDPVPLAKQDAKPENNSESESLLNQPTETKSL. Polar residues predominate over residues 87–103; the sequence is NSESESLLNQPTETKSL.

Belongs to the UPF0161 family.

The protein resides in the cell inner membrane. Its function is as follows. Could be involved in insertion of integral membrane proteins into the membrane. The polypeptide is Putative membrane protein insertion efficiency factor (Idiomarina loihiensis (strain ATCC BAA-735 / DSM 15497 / L2-TR)).